The primary structure comprises 642 residues: RNA polymerase sigma factor RpoD (642 aa).

The tract at residues 199–228 is disordered; it reads HLETTAPEKPSNDNSDENEDDEESEEDADE. Acidic residues predominate over residues 212–228; the sequence is NSDENEDDEESEEDADE. Residues 403-473 are sigma-70 factor domain-2; the sequence is MIQANLRLVI…TRSIADQART (71 aa). The Interaction with polymerase core subunit RpoC motif lies at 427–430; sequence DLIQ. A sigma-70 factor domain-3 region spans residues 482–558; sequence ETINKMNRIS…DANNVAPADA (77 aa). A sigma-70 factor domain-4 region spans residues 571 to 624; that stretch reads ILESLTPREAKVLRMRFGIDMNTDHTLEEVGRQFDVTRERIRQIEAKALRKLRH. The H-T-H motif DNA-binding region spans 597–616; the sequence is LEEVGRQFDVTRERIRQIEA.

The protein belongs to the sigma-70 factor family. RpoD/SigA subfamily. As to quaternary structure, interacts transiently with the RNA polymerase catalytic core.

It is found in the cytoplasm. In terms of biological role, sigma factors are initiation factors that promote the attachment of RNA polymerase to specific initiation sites and are then released. This sigma factor is the primary sigma factor during exponential growth. This Neisseria gonorrhoeae protein is RNA polymerase sigma factor RpoD.